The chain runs to 515 residues: Maturase K (515 aa).

It belongs to the intron maturase 2 family. MatK subfamily.

It is found in the plastid. Its subcellular location is the chloroplast. Its function is as follows. Usually encoded in the trnK tRNA gene intron. Probably assists in splicing its own and other chloroplast group II introns. This Pinus densiflora (Japanese red pine) protein is Maturase K.